A 234-amino-acid chain; its full sequence is Sugar fermentation stimulation protein homolog (234 aa).

This sequence belongs to the SfsA family.

The polypeptide is Sugar fermentation stimulation protein homolog (Pectobacterium atrosepticum (strain SCRI 1043 / ATCC BAA-672) (Erwinia carotovora subsp. atroseptica)).